The following is a 651-amino-acid chain: Beta-mannosyltransferase 7 (651 aa).

The Cytoplasmic segment spans residues 1–19 (MKLEMSSYLHKVPNTGITN). The helical transmembrane segment at 20 to 42 (LSNSKSIVFIMFCATLLFIITSS) threads the bilayer. Over 43-651 (RYLTGSESLG…VKIDEKSEET (609 aa)) the chain is Extracellular. 2 N-linked (GlcNAc...) asparagine glycosylation sites follow: Asn271 and Asn423.

This sequence belongs to the BMT family.

The protein localises to the membrane. Beta-mannosyltransferase involved in cell wall biosynthesis through beta-1,2-mannosylation of cell wall phosphopeptidomannan. This Candida albicans (strain SC5314 / ATCC MYA-2876) (Yeast) protein is Beta-mannosyltransferase 7 (BMT7).